Here is a 380-residue protein sequence, read N- to C-terminus: 1-deoxy-D-xylulose 5-phosphate reductoisomerase (380 aa).

8 residues coordinate NADPH: Thr10, Gly11, Ser12, Ile13, Gly36, Arg37, Asn38, and Asn120. Lys121 contributes to the 1-deoxy-D-xylulose 5-phosphate binding site. Glu122 serves as a coordination point for NADPH. Residue Asp146 coordinates Mn(2+). 1-deoxy-D-xylulose 5-phosphate-binding residues include Ser147, Glu148, Ser172, and His195. A Mn(2+)-binding site is contributed by Glu148. Gly201 provides a ligand contact to NADPH. 1-deoxy-D-xylulose 5-phosphate is bound by residues Ser208, Asn213, Lys214, and Glu217. Glu217 is a Mn(2+) binding site.

This sequence belongs to the DXR family. The cofactor is Mg(2+). Requires Mn(2+) as cofactor.

The enzyme catalyses 2-C-methyl-D-erythritol 4-phosphate + NADP(+) = 1-deoxy-D-xylulose 5-phosphate + NADPH + H(+). It participates in isoprenoid biosynthesis; isopentenyl diphosphate biosynthesis via DXP pathway; isopentenyl diphosphate from 1-deoxy-D-xylulose 5-phosphate: step 1/6. Functionally, catalyzes the NADPH-dependent rearrangement and reduction of 1-deoxy-D-xylulose-5-phosphate (DXP) to 2-C-methyl-D-erythritol 4-phosphate (MEP). The protein is 1-deoxy-D-xylulose 5-phosphate reductoisomerase of Listeria monocytogenes serovar 1/2a (strain ATCC BAA-679 / EGD-e).